Reading from the N-terminus, the 92-residue chain is Small ribosomal subunit protein uS17 (92 aa).

It belongs to the universal ribosomal protein uS17 family. Part of the 30S ribosomal subunit.

Its function is as follows. One of the primary rRNA binding proteins, it binds specifically to the 5'-end of 16S ribosomal RNA. The polypeptide is Small ribosomal subunit protein uS17 (Corynebacterium glutamicum (strain ATCC 13032 / DSM 20300 / JCM 1318 / BCRC 11384 / CCUG 27702 / LMG 3730 / NBRC 12168 / NCIMB 10025 / NRRL B-2784 / 534)).